We begin with the raw amino-acid sequence, 208 residues long: Holliday junction resolvase RecU (208 aa).

Mg(2+) contacts are provided by T87, D89, E102, and Q121.

The protein belongs to the RecU family. Mg(2+) is required as a cofactor.

The protein localises to the cytoplasm. It carries out the reaction Endonucleolytic cleavage at a junction such as a reciprocal single-stranded crossover between two homologous DNA duplexes (Holliday junction).. Functionally, endonuclease that resolves Holliday junction intermediates in genetic recombination. Cleaves mobile four-strand junctions by introducing symmetrical nicks in paired strands. Promotes annealing of linear ssDNA with homologous dsDNA. Required for DNA repair, homologous recombination and chromosome segregation. The chain is Holliday junction resolvase RecU from Staphylococcus aureus (strain MRSA252).